The sequence spans 333 residues: Methionyl-tRNA formyltransferase (333 aa).

Residue 106 to 109 (SLLP) participates in (6S)-5,6,7,8-tetrahydrofolate binding.

This sequence belongs to the Fmt family.

It catalyses the reaction L-methionyl-tRNA(fMet) + (6R)-10-formyltetrahydrofolate = N-formyl-L-methionyl-tRNA(fMet) + (6S)-5,6,7,8-tetrahydrofolate + H(+). Its function is as follows. Attaches a formyl group to the free amino group of methionyl-tRNA(fMet). The formyl group appears to play a dual role in the initiator identity of N-formylmethionyl-tRNA by promoting its recognition by IF2 and preventing the misappropriation of this tRNA by the elongation apparatus. This is Methionyl-tRNA formyltransferase from Elusimicrobium minutum (strain Pei191).